Consider the following 954-residue polypeptide: Valine--tRNA ligase (954 aa).

The 'HIGH' region signature appears at 48 to 58 (PNVTGSLHMGH). A 'KMSKS' region motif is present at residues 560–564 (KMSKS). Position 563 (K563) interacts with ATP. Residues 883–954 (AGFINKEAEL…QTQYQAIENL (72 aa)) are a coiled coil.

The protein belongs to the class-I aminoacyl-tRNA synthetase family. ValS type 1 subfamily. As to quaternary structure, monomer.

It localises to the cytoplasm. The enzyme catalyses tRNA(Val) + L-valine + ATP = L-valyl-tRNA(Val) + AMP + diphosphate. Functionally, catalyzes the attachment of valine to tRNA(Val). As ValRS can inadvertently accommodate and process structurally similar amino acids such as threonine, to avoid such errors, it has a 'posttransfer' editing activity that hydrolyzes mischarged Thr-tRNA(Val) in a tRNA-dependent manner. This is Valine--tRNA ligase from Actinobacillus pleuropneumoniae serotype 3 (strain JL03).